Here is a 429-residue protein sequence, read N- to C-terminus: Adenylosuccinate synthetase (429 aa).

Residues 12 to 18 (GDEGKGK) and 40 to 42 (GHT) each bind GTP. Aspartate 13 acts as the Proton acceptor in catalysis. Aspartate 13 and glycine 40 together coordinate Mg(2+). IMP contacts are provided by residues 13-16 (DEGK), 38-41 (NAGH), threonine 128, arginine 142, glutamine 223, threonine 238, and arginine 302. Histidine 41 serves as the catalytic Proton donor. 298 to 304 (VNTGRPR) contributes to the substrate binding site. GTP is bound by residues arginine 304, 330–332 (KLD), and 412–414 (GVG).

The protein belongs to the adenylosuccinate synthetase family. As to quaternary structure, homodimer. Mg(2+) serves as cofactor.

Its subcellular location is the cytoplasm. The catalysed reaction is IMP + L-aspartate + GTP = N(6)-(1,2-dicarboxyethyl)-AMP + GDP + phosphate + 2 H(+). It functions in the pathway purine metabolism; AMP biosynthesis via de novo pathway; AMP from IMP: step 1/2. Plays an important role in the de novo pathway of purine nucleotide biosynthesis. Catalyzes the first committed step in the biosynthesis of AMP from IMP. This is Adenylosuccinate synthetase from Pseudarthrobacter chlorophenolicus (strain ATCC 700700 / DSM 12829 / CIP 107037 / JCM 12360 / KCTC 9906 / NCIMB 13794 / A6) (Arthrobacter chlorophenolicus).